A 133-amino-acid polypeptide reads, in one-letter code: FPRL1 inhibitory protein (133 aa).

The first 28 residues, 1-28 (MKKNITKTIIASTVIAAGLLTQTNDAKA), serve as a signal peptide directing secretion.

It belongs to the CHIPS/FLIPr family.

The protein resides in the secreted. In terms of biological role, may be involved in countering the first line of host defense mechanisms. Impairs the leukocyte response to FPRL1 agonists by binding directly to host FPRL1. The polypeptide is FPRL1 inhibitory protein (flr) (Staphylococcus aureus (strain USA300)).